A 346-amino-acid polypeptide reads, in one-letter code: MAGIVGYGVYIPSYRIKVEEIARVWGDDPQAISRGLVVEEKSVPGPDEDTATISVEAARNALRRSQIDPSEIGAVYVGSESHPYAVKPTATIVAEAVEATPEMTAADLEFACKAGTAGIQACMGLVDSGIIKYGLAVGADTAQGAPGDALEYTASAGGAAYVIGGKNCLADIKETYSFTTDTPDFYRREGMPYPRHGGRFTGEPAYFKHVLGAARGMMEKTGLSADDFDYAVFHQPNGKFYLKAARKLGFESEQVKPGLLTPVIGNTYSGATPVGLAATLDVAEPGARILAVSYGSGAGSDAFIIEVNDLIEERRDLAPSVAEIIKNKRYVDYALYAKFKGKLRMA.

Asp28 is a binding site for (3S)-3-hydroxy-3-methylglutaryl-CoA. The active-site Proton donor/acceptor is Glu80. The (3S)-3-hydroxy-3-methylglutaryl-CoA site is built by Cys112 and Thr153. Cys112 acts as the Acyl-thioester intermediate in catalysis. Arg199 is a binding site for CoA. 2 residues coordinate (3S)-3-hydroxy-3-methylglutaryl-CoA: Thr201 and His234. The Proton donor/acceptor role is filled by His234. Lys239 contributes to the CoA binding site. Residues Lys243, Asn266, and Ser296 each coordinate (3S)-3-hydroxy-3-methylglutaryl-CoA.

It belongs to the thiolase-like superfamily. Archaeal HMG-CoA synthase family. Interacts with acetoacetyl-CoA thiolase that catalyzes the precedent step in the pathway and with a DUF35 protein. The acetoacetyl-CoA thiolase/HMG-CoA synthase complex channels the intermediate via a fused CoA-binding site, which allows for efficient coupling of the endergonic thiolase reaction with the exergonic HMGCS reaction.

It catalyses the reaction acetoacetyl-CoA + acetyl-CoA + H2O = (3S)-3-hydroxy-3-methylglutaryl-CoA + CoA + H(+). The protein operates within metabolic intermediate biosynthesis; (R)-mevalonate biosynthesis; (R)-mevalonate from acetyl-CoA: step 2/3. In terms of biological role, catalyzes the condensation of acetyl-CoA with acetoacetyl-CoA to form 3-hydroxy-3-methylglutaryl-CoA (HMG-CoA). Functions in the mevalonate (MVA) pathway leading to isopentenyl diphosphate (IPP), a key precursor for the biosynthesis of isoprenoid compounds that are building blocks of archaeal membrane lipids. The polypeptide is Hydroxymethylglutaryl-CoA synthase (Methanothermobacter thermautotrophicus (strain ATCC 29096 / DSM 1053 / JCM 10044 / NBRC 100330 / Delta H) (Methanobacterium thermoautotrophicum)).